The following is a 268-amino-acid chain: Inositol polyphosphate multikinase (268 aa).

ATP is bound by residues lysine 27, 86–88, and aspartate 99; that span reads ENI. Residue 127–135 coordinates substrate; that stretch reads TSGSLGFRI. Aspartate 235 contacts ATP.

This sequence belongs to the inositol phosphokinase (IPK) family.

It localises to the cytoplasm. The protein resides in the nucleus. The enzyme catalyses 1D-myo-inositol 1,4,5-trisphosphate + 2 ATP = 1D-myo-inositol 1,3,4,5,6-pentakisphosphate + 2 ADP + 2 H(+). It catalyses the reaction 1D-myo-inositol 1,4,5-trisphosphate + ATP = 1D-myo-inositol 1,4,5,6-tetrakisphosphate + ADP + H(+). The catalysed reaction is 1D-myo-inositol 1,4,5-trisphosphate + ATP = 1D-myo-inositol 1,3,4,5-tetrakisphosphate + ADP + H(+). It carries out the reaction 1D-myo-inositol 1,4,5,6-tetrakisphosphate + ATP = 1D-myo-inositol 1,3,4,5,6-pentakisphosphate + ADP + H(+). Inositol phosphate kinase with both monophosphoinositol and diphosphoinositol polyphosphate synthase activities. Able to phosphorylate inositol 1,4,5-trisphosphate (Ins(1,4,5)P3) on both the carbon-3 and carbon-6 positions to synthesize inositol 1,3,4,5-tetrakisphosphate (Ins(1,3,4,5)P4) and inositol 1,4,5,6-tetrakisphosphate (Ins(1,4,5,6)P4), and then to subsequently phosphorylate and convert either isomer of InsP4 to inositol 1,3,4,5,6-pentakisphosphate (Ins(1,3,4,5,6)P5). Also converts (Ins(1,3,4,5,6)P5) to InsP6. Also has a role in transcription regulation. The catalytic activity is required for PHO gene repression by phosphate and for NCR gene activation in response to nitrogen availability, indicating a role for inositol pyrophosphates in these controls. Inositol polyphosphates may be involved in the regulation of chromatin remodeling of transcription. This is Inositol polyphosphate multikinase (arg82) from Schizosaccharomyces pombe (strain 972 / ATCC 24843) (Fission yeast).